A 392-amino-acid polypeptide reads, in one-letter code: 1-deoxy-D-xylulose 5-phosphate reductoisomerase (392 aa).

NADPH is bound by residues T10, G11, S12, I13, N38, and N124. Position 125 (K125) interacts with 1-deoxy-D-xylulose 5-phosphate. Residue E126 coordinates NADPH. D150 serves as a coordination point for Mn(2+). 1-deoxy-D-xylulose 5-phosphate-binding residues include S151, E152, S176, and H199. E152 is a Mn(2+) binding site. G205 is a binding site for NADPH. 1-deoxy-D-xylulose 5-phosphate-binding residues include S212, N217, K218, and E221. E221 serves as a coordination point for Mn(2+).

This sequence belongs to the DXR family. Mg(2+) serves as cofactor. Mn(2+) is required as a cofactor.

It catalyses the reaction 2-C-methyl-D-erythritol 4-phosphate + NADP(+) = 1-deoxy-D-xylulose 5-phosphate + NADPH + H(+). It participates in isoprenoid biosynthesis; isopentenyl diphosphate biosynthesis via DXP pathway; isopentenyl diphosphate from 1-deoxy-D-xylulose 5-phosphate: step 1/6. Catalyzes the NADPH-dependent rearrangement and reduction of 1-deoxy-D-xylulose-5-phosphate (DXP) to 2-C-methyl-D-erythritol 4-phosphate (MEP). This chain is 1-deoxy-D-xylulose 5-phosphate reductoisomerase, found in Synechococcus sp. (strain JA-2-3B'a(2-13)) (Cyanobacteria bacterium Yellowstone B-Prime).